A 155-amino-acid polypeptide reads, in one-letter code: MPKGNGKVIAQNKKASHDYFIEDTYEAGIVLHGTEIKSIRNGRVNIKDSHARIDRKGEVQLINLHIAEYEQGNRYNHDPTRSRKLLLHRKEIDKLIGLTQQQGYALVPLKIYLKNGFAKVLIGLGKGKKKYDKREDLKQKQMKRDVDRAIKDHMR.

Residues 132-155 (DKREDLKQKQMKRDVDRAIKDHMR) form a disordered region.

This sequence belongs to the SmpB family.

The protein resides in the cytoplasm. Required for rescue of stalled ribosomes mediated by trans-translation. Binds to transfer-messenger RNA (tmRNA), required for stable association of tmRNA with ribosomes. tmRNA and SmpB together mimic tRNA shape, replacing the anticodon stem-loop with SmpB. tmRNA is encoded by the ssrA gene; the 2 termini fold to resemble tRNA(Ala) and it encodes a 'tag peptide', a short internal open reading frame. During trans-translation Ala-aminoacylated tmRNA acts like a tRNA, entering the A-site of stalled ribosomes, displacing the stalled mRNA. The ribosome then switches to translate the ORF on the tmRNA; the nascent peptide is terminated with the 'tag peptide' encoded by the tmRNA and targeted for degradation. The ribosome is freed to recommence translation, which seems to be the essential function of trans-translation. The sequence is that of SsrA-binding protein from Oceanobacillus iheyensis (strain DSM 14371 / CIP 107618 / JCM 11309 / KCTC 3954 / HTE831).